The sequence spans 340 residues: Zinc finger protein 367 (340 aa).

A disordered region spans residues 101-140; sequence GAPQSSASVAAVSGGEDEEEASSPDSGHLKDGIRRGRPRA. Residues 127 to 140 show a composition bias toward basic and acidic residues; it reads GHLKDGIRRGRPRA. 2 C2H2-type zinc fingers span residues 157–179 and 185–209; these read IRCN…KRTH and YLCD…QRLH. Residues 280–317 form a disordered region; sequence KGKLVQKADQEQQDPLEYLQSDEEDDEKSGAQRRLQEQ. Residues 299-332 are a coiled coil; that stretch reads QSDEEDDEKSGAQRRLQEQRERLHGALALIELAN. S300 carries the post-translational modification Phosphoserine. Over residues 307-317 the composition is skewed to basic and acidic residues; the sequence is KSGAQRRLQEQ.

It belongs to the krueppel C2H2-type zinc-finger protein family. As to expression, expressed in bone marrow and ovary.

It is found in the nucleus. Functionally, transcriptional activator. Isoform 1 may be involved in transcriptional activation of erythroid genes. This is Zinc finger protein 367 (Znf367) from Mus musculus (Mouse).